Here is a 116-residue protein sequence, read N- to C-terminus: Large ribosomal subunit protein bL19 (116 aa).

It belongs to the bacterial ribosomal protein bL19 family.

Functionally, this protein is located at the 30S-50S ribosomal subunit interface and may play a role in the structure and function of the aminoacyl-tRNA binding site. The protein is Large ribosomal subunit protein bL19 of Haemophilus influenzae (strain 86-028NP).